The following is a 201-amino-acid chain: MBF complex negative regulatory component yox1 (201 aa).

Over residues 1-22 the composition is skewed to polar residues; that stretch reads MSLSDSPSKSGNTGKDLISNNE. The disordered stretch occupies residues 1-42; sequence MSLSDSPSKSGNTGKDLISNNEAKNHEDEETHQKKRRRRTTD. Over residues 23-32 the composition is skewed to basic and acidic residues; it reads AKNHEDEETH. Residues 33–92 constitute a DNA-binding region (homeobox); that stretch reads QKKRRRRTTDAEATLLEQYFLKTPKPSLIERQELSKKLKSSMTPRELQIWFQNKRQSLRR.

In terms of assembly, component of the MBF transcription factor complex. In terms of processing, phosphorylated in response to hydroxyurea. Phosphorylation inhibits the repressor activity and is dependent on rad3. However, the regulation of yox1 by rad3 is probably indirect.

Its subcellular location is the nucleus. In terms of biological role, negative regulatory component of the MBF transcription factor complex involved in cell-cycle G1/S phase-specific gene expression and more particularly DNA replication checkpoint-dependent gene expression. The polypeptide is MBF complex negative regulatory component yox1 (yox1) (Schizosaccharomyces pombe (strain 972 / ATCC 24843) (Fission yeast)).